Reading from the N-terminus, the 429-residue chain is UDP-N-acetylglucosamine 1-carboxyvinyltransferase (429 aa).

22–23 lines the phosphoenolpyruvate pocket; it reads KN. Arg-102 lines the UDP-N-acetyl-alpha-D-glucosamine pocket. Cys-126 functions as the Proton donor in the catalytic mechanism. Cys-126 is subject to 2-(S-cysteinyl)pyruvic acid O-phosphothioketal. Residues 171 to 174, Asp-316, and Ile-338 each bind UDP-N-acetyl-alpha-D-glucosamine; that span reads KVSV.

This sequence belongs to the EPSP synthase family. MurA subfamily.

It is found in the cytoplasm. It carries out the reaction phosphoenolpyruvate + UDP-N-acetyl-alpha-D-glucosamine = UDP-N-acetyl-3-O-(1-carboxyvinyl)-alpha-D-glucosamine + phosphate. Its pathway is cell wall biogenesis; peptidoglycan biosynthesis. Functionally, cell wall formation. Adds enolpyruvyl to UDP-N-acetylglucosamine. The sequence is that of UDP-N-acetylglucosamine 1-carboxyvinyltransferase from Xanthobacter autotrophicus (strain ATCC BAA-1158 / Py2).